Here is a 323-residue protein sequence, read N- to C-terminus: Cytochrome c biogenesis protein CcsA (323 aa).

Helical transmembrane passes span 9–29 (ILTH…LLNL), 45–62 (MMAT…RWIY), 71–91 (LYES…VPYF), 98–118 (LSAI…SGLL), 143–163 (MLLG…LLVI), 227–247 (IISL…VWAN), 261–275 (TWAF…IYLH), and 285–305 (VGPA…YFGV).

Belongs to the CcmF/CycK/Ccl1/NrfE/CcsA family. In terms of assembly, may interact with Ccs1.

Its subcellular location is the plastid. It localises to the chloroplast thylakoid membrane. Required during biogenesis of c-type cytochromes (cytochrome c6 and cytochrome f) at the step of heme attachment. This chain is Cytochrome c biogenesis protein CcsA, found in Calycanthus floridus var. glaucus (Eastern sweetshrub).